Here is a 396-residue protein sequence, read N- to C-terminus: Exodeoxyribonuclease 7 large subunit (396 aa).

The protein belongs to the XseA family. As to quaternary structure, heterooligomer composed of large and small subunits.

It is found in the cytoplasm. It carries out the reaction Exonucleolytic cleavage in either 5'- to 3'- or 3'- to 5'-direction to yield nucleoside 5'-phosphates.. Bidirectionally degrades single-stranded DNA into large acid-insoluble oligonucleotides, which are then degraded further into small acid-soluble oligonucleotides. The sequence is that of Exodeoxyribonuclease 7 large subunit from Clostridium tetani (strain Massachusetts / E88).